The primary structure comprises 430 residues: 3-oxo-tetronate kinase (430 aa).

ATP-binding positions include S268, 366 to 369 (GGET), and G410.

Belongs to the four-carbon acid sugar kinase family.

The catalysed reaction is 3-dehydro-L-erythronate + ATP = 3-dehydro-4-O-phospho-L-erythronate + ADP + H(+). The enzyme catalyses 3-dehydro-D-erythronate + ATP = 3-dehydro-4-O-phospho-D-erythronate + ADP + H(+). Catalyzes the ATP-dependent phosphorylation of 3-oxo-tetronate to 3-oxo-tetronate 4-phosphate. This chain is 3-oxo-tetronate kinase, found in Pseudomonas fluorescens (strain ATCC BAA-477 / NRRL B-23932 / Pf-5).